The following is a 464-amino-acid chain: IAA-amino acid hydrolase ILR1-like 6 (464 aa).

A signal peptide spans 1-24 (MDNLRKLNLLSVSLTIIFVSLTIA). The Mn(2+) site is built by Cys175, His177, Glu211, His235, and His433.

This sequence belongs to the peptidase M20 family.

It catalyses the reaction a jasmonyl-L-amino acid + H2O = a jasmonate + an L-alpha-amino acid. Functionally, hydrolyzes certain amino acid conjugates of the plant growth regulator indole-3-acetic acid (IAA). Also hydrolyzes amino acid conjugates of jasmonic acid and 12-hydroxy jasmonic acid. The protein is IAA-amino acid hydrolase ILR1-like 6 of Arabidopsis thaliana (Mouse-ear cress).